The following is a 132-amino-acid chain: Acyl carrier protein 3, chloroplastic (132 aa).

A chloroplast-targeting transit peptide spans 1–49 (MASIAGSAVSFAKPVKAINTNSLSFSGARRGNAFLRLQPVPMRFAVCCS). In terms of domain architecture, Carrier spans 52-127 (QDTVEKVCEI…DAATLIDKLV (76 aa)). At serine 87 the chain carries O-(pantetheine 4'-phosphoryl)serine.

The protein belongs to the acyl carrier protein (ACP) family. In terms of processing, 4'-phosphopantetheine is transferred from CoA to a specific serine of apo-ACP by acpS. This modification is essential for activity because fatty acids are bound in thioester linkage to the sulfhydryl of the prosthetic group.

It localises to the plastid. The protein resides in the chloroplast. It participates in lipid metabolism; fatty acid biosynthesis. Its function is as follows. Carrier of the growing fatty acid chain in fatty acid biosynthesis. In Hordeum vulgare (Barley), this protein is Acyl carrier protein 3, chloroplastic (ACL1.3).